We begin with the raw amino-acid sequence, 684 residues long: Leishmanolysin-like peptidase (684 aa).

Position 257 (H257) interacts with Zn(2+). E258 is a catalytic residue. 2 residues coordinate Zn(2+): H261 and H364.

Belongs to the peptidase M8 family. The cofactor is Zn(2+).

It localises to the cytoplasm. Its function is as follows. Essential for the coordination of mitotic progression, and also plays a role in cell migration. In Drosophila pseudoobscura pseudoobscura (Fruit fly), this protein is Leishmanolysin-like peptidase.